Here is a 591-residue protein sequence, read N- to C-terminus: Cineole synthase 1, chloroplastic (591 aa).

The N-terminal 44 residues, 1–44 (MSSLIMQVVIPKPAKFFHNNLFSLSSKRHRFSTTTTTRGGRWAR), are a transit peptide targeting the chloroplast. (2E)-geranyl diphosphate is bound by residues Arg-308, Asp-345, Asp-349, Arg-486, and Asp-489. Asp-345 and Asp-349 together coordinate Mg(2+). The DDXXD motif motif lies at 345–349 (DDVFD). Asp-489, Thr-493, and Glu-497 together coordinate Mg(2+).

Belongs to the terpene synthase family. Tpsb subfamily. In terms of assembly, monomer. The cofactor is Mg(2+). It depends on Mn(2+) as a cofactor.

The protein localises to the plastid. It is found in the chloroplast. The catalysed reaction is (2E)-geranyl diphosphate + H2O = 1,8-cineole + diphosphate. It carries out the reaction (2E)-geranyl diphosphate = alpha-pinene + diphosphate. It catalyses the reaction (2E)-geranyl diphosphate = beta-pinene + diphosphate. The enzyme catalyses (2E)-geranyl diphosphate + H2O = (S)-alpha-terpineol + diphosphate. The catalysed reaction is (2E)-geranyl diphosphate = beta-myrcene + diphosphate. It carries out the reaction (2E)-geranyl diphosphate = sabinene + diphosphate. The protein operates within secondary metabolite biosynthesis; terpenoid biosynthesis. Functionally, monoterpene synthase (TPS) involved in the biosynthesis of monoterpene natural products, components of the chemical defense arsenal. Catalyzes the conversion of (2E)-geranyl diphosphate (GPP) into 1,8-cineole, and, as minor products, alpha-terpineol, beta-pinene, alpha-pinene, sabinene and myrcene. The sequence is that of Cineole synthase 1, chloroplastic from Salvia fruticosa (Greek sage).